A 344-amino-acid chain; its full sequence is Phosphate acyltransferase (344 aa).

This sequence belongs to the PlsX family. Homodimer. Probably interacts with PlsY.

The protein localises to the cytoplasm. The enzyme catalyses a fatty acyl-[ACP] + phosphate = an acyl phosphate + holo-[ACP]. The protein operates within lipid metabolism; phospholipid metabolism. Functionally, catalyzes the reversible formation of acyl-phosphate (acyl-PO(4)) from acyl-[acyl-carrier-protein] (acyl-ACP). This enzyme utilizes acyl-ACP as fatty acyl donor, but not acyl-CoA. The sequence is that of Phosphate acyltransferase from Blochmanniella floridana.